The sequence spans 815 residues: Phenylalanine--tRNA ligase beta subunit (815 aa).

In terms of domain architecture, tRNA-binding spans 39–153 (ASHAQGVVVG…NVPDLGQPVG (115 aa)). The B5 domain occupies 414-498 (KSAEPVKLRR…RLVGFDRFEA (85 aa)). Asp-476, Asp-482, Glu-485, and Glu-486 together coordinate Mg(2+). One can recognise an FDX-ACB domain in the interval 721 to 814 (PTVPAMELDL…LVKQFSAELR (94 aa)).

It belongs to the phenylalanyl-tRNA synthetase beta subunit family. Type 1 subfamily. As to quaternary structure, tetramer of two alpha and two beta subunits. It depends on Mg(2+) as a cofactor.

It localises to the cytoplasm. The catalysed reaction is tRNA(Phe) + L-phenylalanine + ATP = L-phenylalanyl-tRNA(Phe) + AMP + diphosphate + H(+). The chain is Phenylalanine--tRNA ligase beta subunit from Prochlorococcus marinus (strain MIT 9313).